A 232-amino-acid chain; its full sequence is 5'-methylthioadenosine/S-adenosylhomocysteine nucleosidase (232 aa).

Residue Glu-12 is the Proton acceptor of the active site. Substrate-binding positions include Gly-78, Ile-152, and 173 to 174 (ME). Residue Asp-197 is the Proton donor of the active site.

The protein belongs to the PNP/UDP phosphorylase family. MtnN subfamily. In terms of assembly, homodimer.

It catalyses the reaction S-adenosyl-L-homocysteine + H2O = S-(5-deoxy-D-ribos-5-yl)-L-homocysteine + adenine. The enzyme catalyses S-methyl-5'-thioadenosine + H2O = 5-(methylsulfanyl)-D-ribose + adenine. It carries out the reaction 5'-deoxyadenosine + H2O = 5-deoxy-D-ribose + adenine. Its pathway is amino-acid biosynthesis; L-methionine biosynthesis via salvage pathway; S-methyl-5-thio-alpha-D-ribose 1-phosphate from S-methyl-5'-thioadenosine (hydrolase route): step 1/2. Catalyzes the irreversible cleavage of the glycosidic bond in both 5'-methylthioadenosine (MTA) and S-adenosylhomocysteine (SAH/AdoHcy) to adenine and the corresponding thioribose, 5'-methylthioribose and S-ribosylhomocysteine, respectively. Also cleaves 5'-deoxyadenosine, a toxic by-product of radical S-adenosylmethionine (SAM) enzymes, into 5-deoxyribose and adenine. Thus, is required for in vivo function of the radical SAM enzymes biotin synthase and lipoic acid synthase, that are inhibited by 5'-deoxyadenosine accumulation. This chain is 5'-methylthioadenosine/S-adenosylhomocysteine nucleosidase, found in Shigella boydii serotype 4 (strain Sb227).